Consider the following 95-residue polypeptide: Aspartyl/glutamyl-tRNA(Asn/Gln) amidotransferase subunit C (95 aa).

Belongs to the GatC family. As to quaternary structure, heterotrimer of A, B and C subunits.

The catalysed reaction is L-glutamyl-tRNA(Gln) + L-glutamine + ATP + H2O = L-glutaminyl-tRNA(Gln) + L-glutamate + ADP + phosphate + H(+). The enzyme catalyses L-aspartyl-tRNA(Asn) + L-glutamine + ATP + H2O = L-asparaginyl-tRNA(Asn) + L-glutamate + ADP + phosphate + 2 H(+). Its function is as follows. Allows the formation of correctly charged Asn-tRNA(Asn) or Gln-tRNA(Gln) through the transamidation of misacylated Asp-tRNA(Asn) or Glu-tRNA(Gln) in organisms which lack either or both of asparaginyl-tRNA or glutaminyl-tRNA synthetases. The reaction takes place in the presence of glutamine and ATP through an activated phospho-Asp-tRNA(Asn) or phospho-Glu-tRNA(Gln). This Rhodopseudomonas palustris (strain TIE-1) protein is Aspartyl/glutamyl-tRNA(Asn/Gln) amidotransferase subunit C.